Reading from the N-terminus, the 374-residue chain is Peptide chain release factor 2 (374 aa).

The residue at position 250 (Gln-250) is an N5-methylglutamine.

It belongs to the prokaryotic/mitochondrial release factor family. In terms of processing, methylated by PrmC. Methylation increases the termination efficiency of RF2.

The protein localises to the cytoplasm. Peptide chain release factor 2 directs the termination of translation in response to the peptide chain termination codons UGA and UAA. The chain is Peptide chain release factor 2 from Roseobacter denitrificans (strain ATCC 33942 / OCh 114) (Erythrobacter sp. (strain OCh 114)).